The chain runs to 109 residues: NADH-quinone oxidoreductase subunit K (109 aa).

3 helical membrane-spanning segments follow: residues 12–32, 40–60, and 72–92; these read LNHYLILSSLVFTIGMLGLFM, ILMSIELMLLAVNINFVAFSV, and IIILTIAAAETSIGLAILLIY.

This sequence belongs to the complex I subunit 4L family. NDH-1 is composed of 14 different subunits. Subunits NuoA, H, J, K, L, M, N constitute the membrane sector of the complex.

It localises to the cell inner membrane. The enzyme catalyses a quinone + NADH + 5 H(+)(in) = a quinol + NAD(+) + 4 H(+)(out). NDH-1 shuttles electrons from NADH, via FMN and iron-sulfur (Fe-S) centers, to quinones in the respiratory chain. The immediate electron acceptor for the enzyme in this species is believed to be ubiquinone. Couples the redox reaction to proton translocation (for every two electrons transferred, four hydrogen ions are translocated across the cytoplasmic membrane), and thus conserves the redox energy in a proton gradient. This chain is NADH-quinone oxidoreductase subunit K, found in Rickettsia bellii (strain RML369-C).